The chain runs to 158 residues: 2-C-methyl-D-erythritol 2,4-cyclodiphosphate synthase (158 aa).

A divalent metal cation contacts are provided by Asp8 and His10. Residues 8–10 and 34–35 each bind 4-CDP-2-C-methyl-D-erythritol 2-phosphate; these read DVH and HS. His42 is a binding site for a divalent metal cation. 4-CDP-2-C-methyl-D-erythritol 2-phosphate contacts are provided by residues 56–58, 132–135, and Arg142; these read DIG and TTNE.

This sequence belongs to the IspF family. As to quaternary structure, homotrimer. A divalent metal cation serves as cofactor.

The enzyme catalyses 4-CDP-2-C-methyl-D-erythritol 2-phosphate = 2-C-methyl-D-erythritol 2,4-cyclic diphosphate + CMP. The protein operates within isoprenoid biosynthesis; isopentenyl diphosphate biosynthesis via DXP pathway; isopentenyl diphosphate from 1-deoxy-D-xylulose 5-phosphate: step 4/6. In terms of biological role, involved in the biosynthesis of isopentenyl diphosphate (IPP) and dimethylallyl diphosphate (DMAPP), two major building blocks of isoprenoid compounds. Catalyzes the conversion of 4-diphosphocytidyl-2-C-methyl-D-erythritol 2-phosphate (CDP-ME2P) to 2-C-methyl-D-erythritol 2,4-cyclodiphosphate (ME-CPP) with a corresponding release of cytidine 5-monophosphate (CMP). This is 2-C-methyl-D-erythritol 2,4-cyclodiphosphate synthase from Chlorobium phaeobacteroides (strain DSM 266 / SMG 266 / 2430).